The primary structure comprises 197 residues: LexA repressor (197 aa).

Residues 28–47 (VREIARRFRITPRGALLHLI) constitute a DNA-binding region (H-T-H motif). Residues Ser119 and Lys156 each act as for autocatalytic cleavage activity in the active site.

It belongs to the peptidase S24 family. Homodimer.

It catalyses the reaction Hydrolysis of Ala-|-Gly bond in repressor LexA.. Its function is as follows. Represses a number of genes involved in the response to DNA damage (SOS response), including recA and lexA. In the presence of single-stranded DNA, RecA interacts with LexA causing an autocatalytic cleavage which disrupts the DNA-binding part of LexA, leading to derepression of the SOS regulon and eventually DNA repair. In Thermotoga petrophila (strain ATCC BAA-488 / DSM 13995 / JCM 10881 / RKU-1), this protein is LexA repressor.